Reading from the N-terminus, the 194-residue chain is MISRLTGKLVEKNPPQIVIDVNGVGYEADVSMQTFYNLPPVGESVQLFTQLIIREDAHLLFGFATAEERKTFRQLIKVGGIGAKTALGILSAMTADELARAVAEEDVKRLSSAPGIGKKTAERMVLELRGKLVAHTVTDGLFAASPAADETEDIVSTLLALGYNEREAKAAVKGVPKGTDVGEGVRLALKNLLK.

The tract at residues 1-64 is domain I; the sequence is MISRLTGKLV…EDAHLLFGFA (64 aa). The interval 65-143 is domain II; sequence TAEERKTFRQ…AHTVTDGLFA (79 aa). The flexible linker stretch occupies residues 144 to 147; that stretch reads ASPA. Positions 147–194 are domain III; the sequence is AADETEDIVSTLLALGYNEREAKAAVKGVPKGTDVGEGVRLALKNLLK.

This sequence belongs to the RuvA family. As to quaternary structure, homotetramer. Forms an RuvA(8)-RuvB(12)-Holliday junction (HJ) complex. HJ DNA is sandwiched between 2 RuvA tetramers; dsDNA enters through RuvA and exits via RuvB. An RuvB hexamer assembles on each DNA strand where it exits the tetramer. Each RuvB hexamer is contacted by two RuvA subunits (via domain III) on 2 adjacent RuvB subunits; this complex drives branch migration. In the full resolvosome a probable DNA-RuvA(4)-RuvB(12)-RuvC(2) complex forms which resolves the HJ.

Its subcellular location is the cytoplasm. In terms of biological role, the RuvA-RuvB-RuvC complex processes Holliday junction (HJ) DNA during genetic recombination and DNA repair, while the RuvA-RuvB complex plays an important role in the rescue of blocked DNA replication forks via replication fork reversal (RFR). RuvA specifically binds to HJ cruciform DNA, conferring on it an open structure. The RuvB hexamer acts as an ATP-dependent pump, pulling dsDNA into and through the RuvAB complex. HJ branch migration allows RuvC to scan DNA until it finds its consensus sequence, where it cleaves and resolves the cruciform DNA. This chain is Holliday junction branch migration complex subunit RuvA, found in Neisseria gonorrhoeae (strain ATCC 700825 / FA 1090).